Consider the following 154-residue polypeptide: MRFLGNSEAKTDAKGRVFLPAVFRKQLQAASQECLILRKDTYQDCLVLYPENVWNEQMNELRCKLNRWNSRHQMIFRQFVSDVEVITLDGNGRFLIPKRYLKLAKIQQDVRFIGLDDTIEIWSKEIADKPFITPEDFGKELEEIMGTNNNVEIE.

SpoVT-AbrB domains lie at Asn6–Val53 and Val83–Ile126.

This sequence belongs to the MraZ family. As to quaternary structure, forms oligomers.

The protein localises to the cytoplasm. The protein resides in the nucleoid. The protein is Transcriptional regulator MraZ of Phocaeicola vulgatus (strain ATCC 8482 / DSM 1447 / JCM 5826 / CCUG 4940 / NBRC 14291 / NCTC 11154) (Bacteroides vulgatus).